The primary structure comprises 219 residues: uncharacterized protein (219 aa).

D58 is a catalytic residue.

The protein belongs to the pseudouridine synthase RluA family.

It carries out the reaction a uridine in RNA = a pseudouridine in RNA. This is an uncharacterized protein from Zymomonas mobilis subsp. mobilis (strain ATCC 31821 / ZM4 / CP4).